A 144-amino-acid chain; its full sequence is Interferon-induced transmembrane protein 2 (144 aa).

M1 carries the post-translational modification N-acetylmethionine. Residues 1–56 (MSHNSQAFLSTNAGLPPSYETIKEEYGVTELGEPSNSAVVRTTVINMPREVSVPDH) are Cytoplasmic-facing. Position 19 is a phosphotyrosine (Y19). The segment at residues 57–77 (VVWSLFNTLFFNACCLGFVAY) is an intramembrane region (helical). S-palmitoyl cysteine attachment occurs at residues C70, C71, and C104. Residues 78-110 (AYSVKSRDRKMVGDVVGAQAYASTAKCLNISSL) lie on the Cytoplasmic side of the membrane. Residues 111 to 131 (IFSILMVIICIIIFSTTSVVV) traverse the membrane as a helical segment. Over 132–144 (FQSFAQRTPHSGF) the chain is Extracellular.

It belongs to the CD225/Dispanin family. Interacts with CD81. Post-translationally, palmitoylation on membrane-proximal cysteines controls clustering in membrane compartments and antiviral activity. In terms of processing, phosphorylation at Tyr-19 is required for endosomal and lysosomal location. In terms of tissue distribution, predominantly expressed in nascent primordial germ cells, as well as in gonadal germ cells.

It is found in the cell membrane. It localises to the lysosome membrane. Its subcellular location is the late endosome membrane. Its function is as follows. IFN-induced antiviral protein which inhibits the entry of viruses to the host cell cytoplasm, permitting endocytosis, but preventing subsequent viral fusion and release of viral contents into the cytosol. Active against multiple viruses, including influenza A virus, SARS coronavirus (SARS-CoV), Marburg virus (MARV) and Ebola virus (EBOV), Dengue virus (DNV) and West Nile virus (WNV). Can inhibit: influenza virus hemagglutinin protein-mediated viral entry, MARV and EBOV GP1,2-mediated viral entry and SARS-CoV S protein-mediated viral entry. Induces cell cycle arrest and mediates apoptosis by caspase activation and in p53-independent manner. In Mus musculus (Mouse), this protein is Interferon-induced transmembrane protein 2 (Ifitm2).